A 256-amino-acid polypeptide reads, in one-letter code: Gluconate 5-dehydrogenase (256 aa).

15-39 serves as a coordination point for NADP(+); sequence LVTGASRGIGLTLAKGLARYGAEVV. Ser-147 is a binding site for substrate. Tyr-160 functions as the Proton acceptor in the catalytic mechanism.

Belongs to the short-chain dehydrogenases/reductases (SDR) family. In terms of assembly, homodimer.

Its subcellular location is the cytoplasm. The enzyme catalyses D-gluconate + NADP(+) = 5-dehydro-D-gluconate + NADPH + H(+). Its function is as follows. Catalyzes the reversible NADP-dependent oxidation of gluconate to 5-ketogluconate. Is involved in the non-phosphorylative, ketogenic oxidation of glucose. Is almost inactive with NAD as cosubstrate. Displays high substrate specificity since D-Glucose, D-sorbitol, and D-mannitol are not oxidized by the enzyme, and 2-ketogluconate and L-sorbose are not reduced. Can accept D-fructose as a substrate, with a rate that is only 10% of the rate of 5-ketogluconate reduction. This is Gluconate 5-dehydrogenase from Gluconobacter oxydans (strain 621H) (Gluconobacter suboxydans).